Consider the following 349-residue polypeptide: MSDSQREQRKNEHVEIAMSQKDALVSDFDKVRFVHHSIPSIDVSQVDMTSHTTKFDLAYPIYINAMTGGSDWTKQINEKLAIVARETGIAMAVGSTHAALRNPNMIETFSIVRKTNPKGTIFSNVGADVPVDKALQAVELLDAQALQIHVNSPQELVMPEGNREFASWMSNIESIVKRVDVPVIIKEVGFGMSKETLQALYDIGVNYVDVSGRGGTNFVDIENERRSNKDMNYLSQWGQSTVESLLESTEFQDRLNIFASGGLRTPLDAVKCLALGAKAIGMSRPFLNQVEQSGITNTVDYVESFIQHMKKIMTMLDAPNIERLRQADIVMSPELISWINQRGLHLNRK.

9–10 is a binding site for substrate; the sequence is RK. FMN contacts are provided by residues 65–67, Ser95, and Asn124; that span reads AMT. 95-97 serves as a coordination point for substrate; that stretch reads STH. Residue Gln154 participates in substrate binding. Glu155 is a Mg(2+) binding site. Residues Lys186, Ser211, Thr216, 262–264, and 283–284 each bind FMN; these read GLR and SR.

This sequence belongs to the IPP isomerase type 2 family. As to quaternary structure, homooctamer. Dimer of tetramers. The cofactor is FMN. NADPH is required as a cofactor. It depends on Mg(2+) as a cofactor.

The protein localises to the cytoplasm. The catalysed reaction is isopentenyl diphosphate = dimethylallyl diphosphate. In terms of biological role, involved in the biosynthesis of isoprenoids. Catalyzes the 1,3-allylic rearrangement of the homoallylic substrate isopentenyl (IPP) to its allylic isomer, dimethylallyl diphosphate (DMAPP). This chain is Isopentenyl-diphosphate delta-isomerase, found in Staphylococcus epidermidis (strain ATCC 35984 / DSM 28319 / BCRC 17069 / CCUG 31568 / BM 3577 / RP62A).